Consider the following 258-residue polypeptide: Aspartate/glutamate leucyltransferase (258 aa).

This sequence belongs to the R-transferase family. Bpt subfamily.

It localises to the cytoplasm. The enzyme catalyses N-terminal L-glutamyl-[protein] + L-leucyl-tRNA(Leu) = N-terminal L-leucyl-L-glutamyl-[protein] + tRNA(Leu) + H(+). The catalysed reaction is N-terminal L-aspartyl-[protein] + L-leucyl-tRNA(Leu) = N-terminal L-leucyl-L-aspartyl-[protein] + tRNA(Leu) + H(+). In terms of biological role, functions in the N-end rule pathway of protein degradation where it conjugates Leu from its aminoacyl-tRNA to the N-termini of proteins containing an N-terminal aspartate or glutamate. This chain is Aspartate/glutamate leucyltransferase, found in Rhizobium etli (strain ATCC 51251 / DSM 11541 / JCM 21823 / NBRC 15573 / CFN 42).